A 360-amino-acid chain; its full sequence is Phospho-N-acetylmuramoyl-pentapeptide-transferase (360 aa).

10 helical membrane passes run 21–41 (YITV…LWIG), 73–93 (TMGG…WANL), 94–114 (ANPY…IGFV), 132–152 (WKYF…YAIG), 168–188 (IMPQ…VGTS), 199–219 (GLAI…AWAT), 235–255 (FSAE…GFLW), 263–283 (VFMG…VAVL), 288–308 (FLLV…ILQV), and 338–358 (VIVR…VTLK).

Belongs to the glycosyltransferase 4 family. MraY subfamily. Mg(2+) is required as a cofactor.

The protein localises to the cell inner membrane. The enzyme catalyses UDP-N-acetyl-alpha-D-muramoyl-L-alanyl-gamma-D-glutamyl-meso-2,6-diaminopimeloyl-D-alanyl-D-alanine + di-trans,octa-cis-undecaprenyl phosphate = di-trans,octa-cis-undecaprenyl diphospho-N-acetyl-alpha-D-muramoyl-L-alanyl-D-glutamyl-meso-2,6-diaminopimeloyl-D-alanyl-D-alanine + UMP. Its pathway is cell wall biogenesis; peptidoglycan biosynthesis. Its function is as follows. Catalyzes the initial step of the lipid cycle reactions in the biosynthesis of the cell wall peptidoglycan: transfers peptidoglycan precursor phospho-MurNAc-pentapeptide from UDP-MurNAc-pentapeptide onto the lipid carrier undecaprenyl phosphate, yielding undecaprenyl-pyrophosphoryl-MurNAc-pentapeptide, known as lipid I. In Pasteurella multocida (strain Pm70), this protein is Phospho-N-acetylmuramoyl-pentapeptide-transferase.